The following is a 206-amino-acid chain: Regulatory protein CysR (206 aa).

One can recognise an HTH crp-type domain in the interval 120–196 (RRAEAKLASL…DRALIVRYPE (77 aa)). A DNA-binding region (H-T-H motif) is located at residues 156–175 (HQVIAELSGSTRVTTTRLLG).

It localises to the cytoplasm. In terms of biological role, probably regulates the expression of genes from the sulfate permease complex. The polypeptide is Regulatory protein CysR (cysR) (Synechococcus elongatus (strain ATCC 33912 / PCC 7942 / FACHB-805) (Anacystis nidulans R2)).